The chain runs to 140 residues: Small ribosomal subunit protein uS12m (140 aa).

The protein belongs to the universal ribosomal protein uS12 family.

Its subcellular location is the mitochondrion. This Dictyostelium citrinum (Slime mold) protein is Small ribosomal subunit protein uS12m (mrps12).